The primary structure comprises 292 residues: mRNA export protein 33 (292 aa).

A disordered region spans residues M1–A76. Basic and acidic residues-rich tracts occupy residues G9 to A26 and K58 to A76. The segment at I134–P172 adopts a C3H1-type zinc-finger fold.

The protein localises to the cytoplasm. In terms of biological role, functions as a component of the nuclear pore complex (NPC). NPC components, collectively referred to as nucleoporins (NUPs), can play the role of both NPC structural components and of docking or interaction partners for transiently associated nuclear transport factors. Active directional transport is assured by both, a Phe-Gly (FG) repeat affinity gradient for these transport factors across the NPC and a transport cofactor concentration gradient across the nuclear envelope. Involved in the export of mRNA from the nucleus to the cytoplasm. May play a role in mitotic spindle formation and/or function. The protein is mRNA export protein 33 (mep33) of Schizosaccharomyces pombe (strain 972 / ATCC 24843) (Fission yeast).